The following is a 65-amino-acid chain: Large ribosomal subunit protein uL29 (65 aa).

It belongs to the universal ribosomal protein uL29 family.

In Psychrobacter arcticus (strain DSM 17307 / VKM B-2377 / 273-4), this protein is Large ribosomal subunit protein uL29.